The following is a 216-amino-acid chain: Elongation factor Ts (216 aa).

Positions 81–84 (TDFV) are involved in Mg(2+) ion dislocation from EF-Tu.

This sequence belongs to the EF-Ts family.

The protein resides in the cytoplasm. Its function is as follows. Associates with the EF-Tu.GDP complex and induces the exchange of GDP to GTP. It remains bound to the aminoacyl-tRNA.EF-Tu.GTP complex up to the GTP hydrolysis stage on the ribosome. This Geobacter sp. (strain M21) protein is Elongation factor Ts.